The primary structure comprises 980 residues: MAAARAPWLWWWVVVVVGVAVAEAASGGGGGGDGEGKALMGVKAGFGNAANALVDWDGGADHCAWRGVTCDNASFAVLALNLSNLNLGGEISPAIGELKNLQFVDLKGNKLTGQIPDEIGDCISLKYLDLSGNLLYGDIPFSISKLKQLEELILKNNQLTGPIPSTLSQIPNLKTLDLAQNQLTGDIPRLIYWNEVLQYLGLRGNSLTGTLSPDMCQLTGLWYFDVRGNNLTGTIPESIGNCTSFEILDISYNQISGEIPYNIGFLQVATLSLQGNRLTGKIPDVIGLMQALAVLDLSENELVGPIPSILGNLSYTGKLYLHGNKLTGVIPPELGNMSKLSYLQLNDNELVGTIPAELGKLEELFELNLANNNLQGPIPANISSCTALNKFNVYGNKLNGSIPAGFQKLESLTYLNLSSNNFKGNIPSELGHIINLDTLDLSYNEFSGPVPATIGDLEHLLELNLSKNHLDGPVPAEFGNLRSVQVIDMSNNNLSGSLPEELGQLQNLDSLILNNNNLVGEIPAQLANCFSLNNLNLSYNNLSGHVPMAKNFSKFPMESFLGNPLLHVYCQDSSCGHSHGQRVNISKTAIACIILGFIILLCVLLLAIYKTNQPQPLVKGSDKPVQGPPKLVVLQMDMAIHTYEDIMRLTENLSEKYIIGYGASSTVYKCELKSGKAIAVKRLYSQYNHSLREFETELETIGSIRHRNLVSLHGFSLSPHGNLLFYDYMENGSLWDLLHGPSKKVKLNWDTRLRIAVGAAQGLAYLHHDCNPRIIHRDVKSSNILLDENFEAHLSDFGIAKCVPSAKSHASTYVLGTIGYIDPEYARTSRLNEKSDVYSFGIVLLELLTGKKAVDNESNLHQLILSKADDNTVMEAVDSEVSVTCTDMGLVRKAFQLALLCTKRHPSDRPTMHEVARVLLSLLPASAMTTPKTVDYSRLLASTTTAADMRGHDVTDIGDNSSSDEQWFVRFGEVISKHTM.

Positions 1 to 24 (MAAARAPWLWWWVVVVVGVAVAEA) are cleaved as a signal peptide. Topologically, residues 25–588 (ASGGGGGGDG…HGQRVNISKT (564 aa)) are extracellular. 2 N-linked (GlcNAc...) asparagine glycosylation sites follow: Asn72 and Asn81. 20 LRR repeats span residues 75-98 (FAVL…IGEL), 99-122 (KNLQ…IGDC), 124-146 (SLKY…ISKL), 147-170 (KQLE…LSQI), 171-194 (PNLK…IYWN), 196-218 (VLQY…MCQL), 219-242 (TGLW…IGNC), 243-265 (TSFE…NIGF), 266-289 (LQVA…IGLM), 290-312 (QALA…ILGN), 314-337 (SYTG…LGNM), 338-361 (SKLS…LGKL), 362-385 (EELF…ISSC), 387-408 (ALNK…GFQK), 409-433 (LESL…LGHI), 435-457 (NLDT…IGDL), 458-480 (EHLL…EFGN), 481-505 (LRSV…LGQL), 507-529 (NLDS…LANC), and 531-554 (SLNN…NFSK). Residues Asn230 and Asn241 are each glycosylated (N-linked (GlcNAc...) asparagine). Residues Asn312 and Asn336 are each glycosylated (N-linked (GlcNAc...) asparagine). 3 N-linked (GlcNAc...) asparagine glycosylation sites follow: Asn381, Asn399, and Asn416. Residues Asn464 and Asn493 are each glycosylated (N-linked (GlcNAc...) asparagine). Asn536, Asn541, Asn551, and Asn584 each carry an N-linked (GlcNAc...) asparagine glycan. Residues 589 to 609 (AIACIILGFIILLCVLLLAIY) form a helical membrane-spanning segment. The Cytoplasmic segment spans residues 610 to 980 (KTNQPQPLVK…FGEVISKHTM (371 aa)). The Protein kinase domain occupies 653–923 (LSEKYIIGYG…EVARVLLSLL (271 aa)). ATP-binding positions include 659–667 (IGYGASSTV) and Lys681. Asp778 acts as the Proton acceptor in catalysis.

This sequence belongs to the protein kinase superfamily. Ser/Thr protein kinase family. In terms of processing, autophosphorylated. In terms of tissue distribution, expressed in nodes, vascular bundles of stems, and anthers.

The protein resides in the cell membrane. The enzyme catalyses L-seryl-[protein] + ATP = O-phospho-L-seryl-[protein] + ADP + H(+). The catalysed reaction is L-threonyl-[protein] + ATP = O-phospho-L-threonyl-[protein] + ADP + H(+). Its function is as follows. Receptor kinase involved in salt drought stress responses. Acts as a positive regulator of salt and drought tolerance. May promote salt and drought tolerance through the induction of the activities of antioxidative enzymes, such as peroxidase, superoxide dismutase and catalase. May be involved in the control of stomatal development in leaf epidermis. Possesses kinase activity in vitro. Does not seem to be involved in heat tolerance. The protein is LRR receptor-like serine/threonine-protein kinase SIK1 of Oryza sativa subsp. japonica (Rice).